Consider the following 303-residue polypeptide: GTPase Era (303 aa).

The 168-residue stretch at 7–174 (KSGFVAILGR…IDTLSEKLDE (168 aa)) folds into the Era-type G domain. The segment at 15 to 22 (GRPNVGKS) is G1. 15-22 (GRPNVGKS) lines the GTP pocket. Positions 41 to 45 (QTTRN) are G2. The tract at residues 62–65 (DTPG) is G3. GTP-binding positions include 62–66 (DTPGI) and 124–127 (NKID). Residues 124-127 (NKID) form a G4 region. The segment at 153–155 (ISA) is G5. The KH type-2 domain maps to 205 to 283 (TREEVPHSIA…YLETWVKIKN (79 aa)).

The protein belongs to the TRAFAC class TrmE-Era-EngA-EngB-Septin-like GTPase superfamily. Era GTPase family. In terms of assembly, monomer.

Its subcellular location is the cytoplasm. The protein resides in the cell membrane. An essential GTPase that binds both GDP and GTP, with rapid nucleotide exchange. Plays a role in 16S rRNA processing and 30S ribosomal subunit biogenesis and possibly also in cell cycle regulation and energy metabolism. This is GTPase Era from Lactococcus lactis subsp. lactis (strain IL1403) (Streptococcus lactis).